The sequence spans 1132 residues: MDLSKWCNLKTEPSLKHLTEAGFGVPKEKQSVPVQELVKAHIESFDQAVTDGLCRVVEAIPPMEFLYKGDRISLSFVEAIIHTPSVSKGGISRDLRVFPAECRGRRCTYRAKLVADVSWSVNGVPKGIIKQSLGQMPIMVKSKLCNLHGLSPKELLEHHEEAEEMGGYFIVNGIEKVIRLLIMPRRNYPIAVSRPKFKSRGQGYTQYAISMRCVKEEHTAINMNLHYLDNGTVMVNFIYRKELFFLPLGFALKALVDYSDYQIYQELIKGREDNSFYKSCVSEMLRIVMDQGCTTKIKVLNYLGERFRVKLNLPEWFTHEQCAHFLLDECLCIHLKTDVEKFYMLCLMTRKLFSFAKQECMEENPDSPMFHEVLTPGQLYLMFLKEKMEGWLVSVKLALEKKPQRVGGLTPDSMTKLFNMGTDLTKAFEYLLATGNLMSKTGLGMLQNSGLCVVADKLNFIRYLSHFRCVHRGAAFAKMRTTTVRKLLPESWGFLCPVHTPDGEPCGLMNHMTAHCEIVAPVYPTSTLPGLLCSLGVNAADGNPGQAYSDCYPVILDGAMIGWVEKEVAPSVIESLRRFKVLGEKKVPPWTEIVLVPQTGKASLYPGLYLFTTPCRMVRTVRNLSLGKQELIGIFEQVYLNVGIFEKEIEDGVTTHQELFPHSMLSVVAEFIPFSDHNQSPRNMYQCQMSKQTMGFPLHSYQYRSDNKLYRLQTPQSPLVRPAMYDHYDVDNYPIGTNAIVAVISYTGYDMEDAMIVNKSSWERGFAHGSVYKTEIIDLSEKVKGDDSIVFGVKPGDPKVMGKLDADGLPFIGSVLKYGDPFYGYISLNTGQSHVYFYKYQESCVVDNIKVCSNETGTGRFKRICVTSRVPRNPTIGDKFASRHGQKGILSRLWPAEDMPFTESGMSPDILFNPHGFPSRMTIGMLIESMAGKSASLHGLCHDATPFTFSEENSALEHFGELLKAAGYNYYGTERLYSGLSGLELEADIFIGVVYYQRLRHMVSDKFQVRTTGARDKVTNQPMGGRNVQGGIRFGEMERDALLAHGTSFLLHDRLFNCSDRSVAQVCMDCGSLLSPLLEKPPPNWSATRHRKTICLLCNKSDSIETVSVPYVFKYFVAELAAMNIKIKLDVK.

Residues 1067–1098 form a C4-type zinc finger; sequence CMDCGSLLSPLLEKPPPNWSATRHRKTICLLC.

It belongs to the RNA polymerase beta chain family. As to quaternary structure, component of the RNA polymerase I (Pol I) complex consisting of at least 13 subunits.

The protein resides in the nucleus. It is found in the nucleolus. The protein localises to the chromosome. The enzyme catalyses RNA(n) + a ribonucleoside 5'-triphosphate = RNA(n+1) + diphosphate. Its function is as follows. DNA-dependent RNA polymerase catalyzes the transcription of DNA into RNA using the four ribonucleoside triphosphates as substrates. Second largest core component of RNA polymerase I which synthesizes ribosomal RNA precursors. Proposed to contribute to the polymerase catalytic activity and forms the polymerase active center together with the largest subunit. Pol I is composed of mobile elements and RPA2 is part of the core element with the central large cleft and probably a clamp element that moves to open and close the cleft. The protein is DNA-directed RNA polymerase I subunit RPA2 (polr1b) of Danio rerio (Zebrafish).